A 157-amino-acid chain; its full sequence is Large ribosomal subunit protein eL24 (157 aa).

A Glycyl lysine isopeptide (Lys-Gly) (interchain with G-Cter in SUMO2) cross-link involves residue lysine 2. Position 4 is an ADP-ribosyl glutamic acid (glutamate 4). At lysine 27 the chain carries N6-acetyllysine; alternate. Lysine 27 is covalently cross-linked (Glycyl lysine isopeptide (Lys-Gly) (interchain with G-Cter in SUMO2); alternate). Residue lysine 35 forms a Glycyl lysine isopeptide (Lys-Gly) (interchain with G-Cter in SUMO2) linkage. Lysine 77 is subject to N6-acetyllysine. Position 83 is a phosphothreonine (threonine 83). A Phosphoserine modification is found at serine 86. The residue at position 93 (lysine 93) is an N6-acetyllysine. Over residues 106–117 the composition is skewed to basic and acidic residues; sequence EQAIRAAKEAKK. Residues 106–157 are disordered; that stretch reads EQAIRAAKEAKKAKQASKKTAMAAAKAPTKAAPKQKIVKPVKVSAPRVGGKR. Over residues 123–140 the composition is skewed to low complexity; the sequence is KKTAMAAAKAPTKAAPKQ. Lysine 131 carries the N6-succinyllysine modification. Lysine 147 is covalently cross-linked (Glycyl lysine isopeptide (Lys-Gly) (interchain with G-Cter in SUMO2)). The residue at position 149 (serine 149) is a Phosphoserine.

It belongs to the eukaryotic ribosomal protein eL24 family. Component of the large ribosomal subunit. Post-translationally, mono-ADP-ribosylation at Glu-4 by PARP16 inhibits polysome assembly and mRNA loading, thereby inhibiting protein translation.

The protein localises to the cytoplasm. Component of the large ribosomal subunit. The ribosome is a large ribonucleoprotein complex responsible for the synthesis of proteins in the cell. This chain is Large ribosomal subunit protein eL24 (RPL24), found in Bos taurus (Bovine).